The sequence spans 283 residues: Pre-mRNA-splicing factor CWC23 (283 aa).

Residues 15–87 (NLYDVLELPT…DVRPHYDRWL (73 aa)) form the J domain.

This sequence belongs to the DnaJ family. As to quaternary structure, belongs to the CWC complex (or CEF1-associated complex), a spliceosome sub-complex reminiscent of a late-stage spliceosome composed of the U2, U5 and U6 snRNAs and at least BUD13, BUD31, BRR2, CDC40, CEF1, CLF1, CUS1, CWC2, CWC15, CWC21, CWC22, CWC23, CWC24, CWC25, CWC27, ECM2, HSH155, IST3, ISY1, LEA1, MSL1, NTC20, PRP8, PRP9, PRP11, PRP19, PRP21, PRP22, PRP45, PRP46, SLU7, SMB1, SMD1, SMD2, SMD3, SMX2, SMX3, SNT309, SNU114, SPP2, SYF1, SYF2, RSE1 and YJU2.

It is found in the cytoplasm. It localises to the nucleus. Its function is as follows. Involved in pre-mRNA splicing. May be involved in endoplasmic reticulum-associated protein degradation (ERAD) and required for growth at low and high temperatures. This chain is Pre-mRNA-splicing factor CWC23 (CWC23), found in Saccharomyces cerevisiae (strain ATCC 204508 / S288c) (Baker's yeast).